Here is a 460-residue protein sequence, read N- to C-terminus: 25S rRNA (cytosine-C(5))-methyltransferase rcm1 (460 aa).

S-adenosyl-L-methionine is bound by residues 223–229, Glu246, Asp273, and Asp293; that span reads CAAPGNK. Cys350 serves as the catalytic Nucleophile. Basic and acidic residues predominate over residues 430–439; that stretch reads KMYKNDDDTK. Positions 430–460 are disordered; it reads KMYKNDDDTKKRKRKKKKKEVKKKARIQGEE. A compositionally biased stretch (basic residues) spans 440 to 460; the sequence is KRKRKKKKKEVKKKARIQGEE.

This sequence belongs to the class I-like SAM-binding methyltransferase superfamily. RsmB/NOP family. In terms of assembly, interacts with trm112.

It is found in the nucleus. The protein localises to the nucleolus. The catalysed reaction is a cytidine in 25S rRNA + S-adenosyl-L-methionine = a 5-methylcytidine in 25S rRNA + S-adenosyl-L-homocysteine + H(+). In terms of biological role, S-adenosyl-L-methionine-dependent methyltransferase that specifically methylates the C(5) position of a cytosine in 25S rRNA. The sequence is that of 25S rRNA (cytosine-C(5))-methyltransferase rcm1 (rcm1) from Schizosaccharomyces pombe (strain 972 / ATCC 24843) (Fission yeast).